Here is a 218-residue protein sequence, read N- to C-terminus: Trimethylamine corrinoid protein 2 (218 aa).

The region spanning 1–92 (MAGKEEIIAK…EMEKRKSQTK (92 aa)) is the B12-binding N-terminal domain. In terms of domain architecture, B12-binding spans 94–218 (LGTVIIGTIE…AKVKAALKVG (125 aa)). Histidine 107 lines the methylcob(III)alamin pocket.

The protein belongs to the methylamine corrinoid protein family. As to quaternary structure, can form a complex with MttB.

It functions in the pathway one-carbon metabolism; methanogenesis from trimethylamine. Functionally, acts probably as a methyl group carrier between MttB and either MtbA or MtaA. The polypeptide is Trimethylamine corrinoid protein 2 (mttC2) (Methanosarcina mazei (strain ATCC BAA-159 / DSM 3647 / Goe1 / Go1 / JCM 11833 / OCM 88) (Methanosarcina frisia)).